The chain runs to 377 residues: Nucleosome assembly protein 1;2 (377 aa).

A coiled-coil region spans residues 26–80 (VNVLKNKLHDLTGKHSNVTESLSPNVRKRVEALREIQTEHDELEAKFFEERAALE). A Nuclear export signal motif is present at residues 47 to 62 (LSPNVRKRVEALREIQ). The short motif at 223–228 (KKKPKK) is the Nuclear localization signal element. The tract at residues 298–377 (EAAEDDYAEL…GERPPECKQQ (80 aa)) is disordered. Positions 299-342 (AAEDDYAELEDDEDEDDDEEDDEDEDEEEEDEEDDEDEEEDEDE) are enriched in acidic residues. Cys-374 carries the cysteine methyl ester modification. Cys-374 carries the S-farnesyl cysteine lipid modification. Residues 375 to 377 (KQQ) constitute a propeptide, removed in mature form.

The protein belongs to the nucleosome assembly protein (NAP) family. In terms of assembly, binds preferentially histone H1 in vitro. Interacts with CYCB1;1.

It is found in the nucleus. Its subcellular location is the cytoplasm. Its function is as follows. May modulate chromatin structure by regulation of nucleosome assembly/disassembly. Could function together with B-type cyclins in the regulation of microtubule dynamics. In Nicotiana tabacum (Common tobacco), this protein is Nucleosome assembly protein 1;2 (NAP1;2).